The chain runs to 453 residues: MAQWDDFPDQQEDTDSCTESVKFDARSVTALLPPHPKNGPTLQERMKSYKTALITLYLIVFVVLVPIIGIVAAQLLKWETKNCTVGSVNADISPSPEGKGNGSEDEMRFREAVMERMSNMESRIQYLSDNEANLLDAKNFQNFSITTDQRFNDVLFQLNSLLSSIQEHENIIGDISKSLVGLNTTVLDLQFSIETLNGRVQENAFKQQEEMRKLEERIYNASAEIKSLDEKQVYLEQEIKGEMKLLNNITNDLRLKDWEHSQTLKNITLLQGPPGPPGEKGDRGPPGQNGIPGFPGLIGTPGLKGDRGISGLPGVRGFPGPMGKTGKPGLNGQKGQKGEKGSGSMQRQSNTVRLVGGSGPHEGRVEIFHEGQWGTVCDDRWELRGGLVVCRSLGYKGVQSVHKRAYFGKGTGPIWLNEVFCFGKESSIEECRIRQWGVRACSHDEDAGVTCTT.

The Cytoplasmic portion of the chain corresponds to 1 to 50; that stretch reads MAQWDDFPDQQEDTDSCTESVKFDARSVTALLPPHPKNGPTLQERMKSYK. Residue serine 27 is modified to Phosphoserine. A helical; Signal-anchor for type II membrane protein transmembrane segment spans residues 51-76; it reads TALITLYLIVFVVLVPIIGIVAAQLL. Residues 77–108 form a spacer region; sequence KWETKNCTVGSVNADISPSPEGKGNGSEDEMR. Residues 77-453 are Extracellular-facing; it reads KWETKNCTVG…DEDAGVTCTT (377 aa). Asparagine 82, asparagine 101, asparagine 142, asparagine 183, asparagine 220, asparagine 248, and asparagine 266 each carry an N-linked (GlcNAc...) asparagine glycan. Positions 194 to 255 form a coiled coil; the sequence is ETLNGRVQEN…LNNITNDLRL (62 aa). Disordered regions lie at residues 267-295 and 313-349; these read ITLLQGPPGPPGEKGDRGPPGQNGIPGFP and PGVRGFPGPMGKTGKPGLNGQKGQKGEKGSGSMQRQS. A Collagen-like domain is found at 272 to 343; sequence GPPGPPGEKG…KGQKGEKGSG (72 aa). Residues 352 to 452 form the SRCR domain; that stretch reads VRLVGGSGPH…HDEDAGVTCT (101 aa). 3 cysteine pairs are disulfide-bonded: cysteine 377–cysteine 441, cysteine 390–cysteine 451, and cysteine 421–cysteine 431.

As to quaternary structure, homotrimer. Interacts with MYO18A.

It localises to the membrane. Functionally, membrane glycoproteins implicated in the pathologic deposition of cholesterol in arterial walls during atherogenesis. Two types of receptor subunits exist. These receptors mediate the endocytosis of a diverse group of macromolecules, including modified low density lipoproteins (LDL). The chain is Macrophage scavenger receptor types I and II (MSR1) from Bos taurus (Bovine).